The chain runs to 209 residues: Large ribosomal subunit protein uL3 (209 aa).

Residues 127 to 152 are disordered; it reads SGGPSSHGSKFHRHLGSTGQAATPSR. The span at 143-152 shows a compositional bias: polar residues; it reads STGQAATPSR.

This sequence belongs to the universal ribosomal protein uL3 family. Part of the 50S ribosomal subunit. Forms a cluster with proteins L14 and L19.

One of the primary rRNA binding proteins, it binds directly near the 3'-end of the 23S rRNA, where it nucleates assembly of the 50S subunit. The sequence is that of Large ribosomal subunit protein uL3 from Borrelia hermsii (strain HS1 / DAH).